The primary structure comprises 109 residues: Tyrosine-protein phosphatase 16 (109 aa).

A Tyrosine-protein phosphatase domain is found at 1–109 (WRMVTEHTST…RIKTQKPIVV (109 aa)). D81 is a substrate binding site.

The protein belongs to the protein-tyrosine phosphatase family.

The catalysed reaction is O-phospho-L-tyrosyl-[protein] + H2O = L-tyrosyl-[protein] + phosphate. The polypeptide is Tyrosine-protein phosphatase 16 (STY-16) (Styela plicata (Wrinkled sea squirt)).